Reading from the N-terminus, the 653-residue chain is Acetyl-coenzyme A synthetase 1 (653 aa).

CoA-binding positions include 191 to 194 (RGGR), Thr311, and Asn335. ATP is bound by residues 387-389 (GEP), 411-416 (DTWWQT), Asp500, and Arg515. A CoA-binding site is contributed by Ser523. ATP is bound at residue Arg526. Mg(2+) contacts are provided by Val537, His539, and Val542. Residue Arg584 participates in CoA binding. Lys609 carries the N6-acetyllysine modification.

It belongs to the ATP-dependent AMP-binding enzyme family. Mg(2+) serves as cofactor. Post-translationally, acetylated. Deacetylation by the SIR2-homolog deacetylase activates the enzyme.

It carries out the reaction acetate + ATP + CoA = acetyl-CoA + AMP + diphosphate. Catalyzes the conversion of acetate into acetyl-CoA (AcCoA), an essential intermediate at the junction of anabolic and catabolic pathways. AcsA undergoes a two-step reaction. In the first half reaction, AcsA combines acetate with ATP to form acetyl-adenylate (AcAMP) intermediate. In the second half reaction, it can then transfer the acetyl group from AcAMP to the sulfhydryl group of CoA, forming the product AcCoA. The protein is Acetyl-coenzyme A synthetase 1 of Pseudomonas putida (strain ATCC 47054 / DSM 6125 / CFBP 8728 / NCIMB 11950 / KT2440).